We begin with the raw amino-acid sequence, 629 residues long: Polyadenylate-binding protein, cytoplasmic and nuclear (629 aa).

Over residues M1 to E11 the composition is skewed to polar residues. Residues M1–A48 form a disordered region. A compositionally biased stretch (low complexity) spans S20 to Q36. 4 consecutive RRM domains span residues A52 to R130, G140 to S217, T233 to K310, and V336 to R413. Residues P503–N534 form a disordered region. The span at Q505–P517 shows a compositional bias: polar residues. The region spanning S537 to K618 is the PABC domain.

Belongs to the polyadenylate-binding protein type-1 family.

It localises to the cytoplasm. The protein resides in the nucleus. Its function is as follows. Binds the poly(A) tail of mRNA. Appears to be an important mediator of the multiple roles of the poly(A) tail in mRNA biogenesis, stability and translation. In the nucleus, involved in both mRNA cleavage and polyadenylation. Is also required for efficient mRNA export to the cytoplasm. Acts in concert with a poly(A)-specific nuclease (PAN) to affect poly(A) tail shortening, which may occur concomitantly with either nucleocytoplasmic mRNA transport or translational initiation. In the cytoplasm, stimulates translation initiation and regulates mRNA decay through translation termination-coupled poly(A) shortening, probably mediated by PAN. The sequence is that of Polyadenylate-binding protein, cytoplasmic and nuclear (PAB1) from Candida albicans (strain SC5314 / ATCC MYA-2876) (Yeast).